The primary structure comprises 223 residues: MQLVTASEMQKIDTYTVNTIGMPQDVLIERAALSVIDVIGAGHFNLEHILVLAGLGNNGADGVAITRLLYAQGFNVSLQFVGNVSRAKESVQRQLAIIEKYGLVRSEKSDFNEATLIIDAIFGTGLNNLLPEGLQKMIKAANHIEKTVIAIDTPTGIDATTGEVRGAALKAHTTVTFGYNKIGLTRRVGGYLSGNVIVKDIGLLTPPDFSFSDTEENHSTKDV.

One can recognise a YjeF N-terminal domain in the interval 9 to 209 (MQKIDTYTVN…DIGLLTPPDF (201 aa)). Residue 57 to 61 (NNGAD) coordinates (6S)-NADPHX. 2 residues coordinate K(+): Asn-58 and Asp-119. Residues 123 to 129 (GTGLNNL) and Asp-152 contribute to the (6S)-NADPHX site. Residue Thr-155 participates in K(+) binding.

The protein belongs to the NnrE/AIBP family. K(+) is required as a cofactor.

The catalysed reaction is (6R)-NADHX = (6S)-NADHX. The enzyme catalyses (6R)-NADPHX = (6S)-NADPHX. Catalyzes the epimerization of the S- and R-forms of NAD(P)HX, a damaged form of NAD(P)H that is a result of enzymatic or heat-dependent hydration. This is a prerequisite for the S-specific NAD(P)H-hydrate dehydratase to allow the repair of both epimers of NAD(P)HX. This is NAD(P)H-hydrate epimerase from Leuconostoc gelidum subsp. gasicomitatum (strain DSM 15947 / CCUG 46042 / CECT 5767 / JCM 12535 / LMG 18811 / NBRC 113245 / TB1-10) (Leuconostoc gasicomitatum).